The chain runs to 291 residues: Gamma-soluble NSF attachment protein (291 aa).

The protein belongs to the SNAP family.

Its subcellular location is the membrane. Functionally, required for vesicular transport between the endoplasmic reticulum and the Golgi apparatus. Binds to SNARE complex and then recruits NSF to disassemble it. This Arabidopsis thaliana (Mouse-ear cress) protein is Gamma-soluble NSF attachment protein (GSNAP).